Reading from the N-terminus, the 124-residue chain is Holo-[acyl-carrier-protein] synthase (124 aa).

Residues Asp-5 and Glu-56 each coordinate Mg(2+).

This sequence belongs to the P-Pant transferase superfamily. AcpS family. Requires Mg(2+) as cofactor.

It is found in the cytoplasm. It carries out the reaction apo-[ACP] + CoA = holo-[ACP] + adenosine 3',5'-bisphosphate + H(+). Its function is as follows. Transfers the 4'-phosphopantetheine moiety from coenzyme A to a Ser of acyl-carrier-protein. This is Holo-[acyl-carrier-protein] synthase from Campylobacter hominis (strain ATCC BAA-381 / DSM 21671 / CCUG 45161 / LMG 19568 / NCTC 13146 / CH001A).